The sequence spans 488 residues: MSTLYIAGAWQAGQGELFHSLNPVSQQTLWSGQAATPEQVDYAVQAARQAFPGWAQRSLDQRIAVLEAFAASLKGRADELAHCIGEETGKPLWESATEVTSMVNKIAISVQSYRERTGEKSGPLGDATAVLRHKPHGVVAVFGPYNFPGHLPNGHIVPALLAGNTVVFKPSELTPKVAELTVKCWIEAGLPAGVLNLLQGGRETGIALAANPGIDGLFFTGSSRTGDALHQQFAGRPDKILALEMGGNNPLIVDQVQDIEAAVYNIIQSAFISAGQRCTCARRLLVPEGDWGDALLARLVAVSATIEVGAFDQQPSPFMGSVISLEAAHALLDAQRNLLANGAVTLLEMRQPQAGAALLTPGIINVSAVAERPDEELFGPLLQVIRYAGFDAAIAEANATRYGLAAGLLSDSEARYQQFWLHSRAGIVNWNKQLTGAASSAPFGGVGASGNHRASAYYAADYCAYPVASLEAGSLTLPSTLTPGIRLS.

An NAD(+)-binding site is contributed by 221 to 226 (GSSRTG). Active-site residues include E244 and C278.

This sequence belongs to the aldehyde dehydrogenase family. AstD subfamily.

It catalyses the reaction N-succinyl-L-glutamate 5-semialdehyde + NAD(+) + H2O = N-succinyl-L-glutamate + NADH + 2 H(+). It participates in amino-acid degradation; L-arginine degradation via AST pathway; L-glutamate and succinate from L-arginine: step 4/5. Catalyzes the NAD-dependent reduction of succinylglutamate semialdehyde into succinylglutamate. The protein is N-succinylglutamate 5-semialdehyde dehydrogenase of Pseudomonas savastanoi pv. phaseolicola (strain 1448A / Race 6) (Pseudomonas syringae pv. phaseolicola (strain 1448A / Race 6)).